Consider the following 445-residue polypeptide: 3-phosphoshikimate 1-carboxyvinyltransferase (445 aa).

The disordered stretch occupies residues 1–20 (MSTSAAPTPLESRASGPLSG). Residues lysine 28, serine 29, and arginine 33 each coordinate 3-phosphoshikimate. A phosphoenolpyruvate-binding site is contributed by lysine 28. 2 residues coordinate phosphoenolpyruvate: glycine 101 and arginine 129. 3-phosphoshikimate-binding residues include serine 175, glutamine 177, aspartate 328, and lysine 355. Glutamine 177 serves as a coordination point for phosphoenolpyruvate. Catalysis depends on aspartate 328, which acts as the Proton acceptor. Residues arginine 359 and arginine 402 each coordinate phosphoenolpyruvate.

The protein belongs to the EPSP synthase family. Monomer.

The protein localises to the cytoplasm. It catalyses the reaction 3-phosphoshikimate + phosphoenolpyruvate = 5-O-(1-carboxyvinyl)-3-phosphoshikimate + phosphate. Its pathway is metabolic intermediate biosynthesis; chorismate biosynthesis; chorismate from D-erythrose 4-phosphate and phosphoenolpyruvate: step 6/7. Its function is as follows. Catalyzes the transfer of the enolpyruvyl moiety of phosphoenolpyruvate (PEP) to the 5-hydroxyl of shikimate-3-phosphate (S3P) to produce enolpyruvyl shikimate-3-phosphate and inorganic phosphate. This Bradyrhizobium sp. (strain ORS 278) protein is 3-phosphoshikimate 1-carboxyvinyltransferase.